We begin with the raw amino-acid sequence, 359 residues long: Putative nucleotidyltransferase MAB21L1 (359 aa).

A ribonucleoside 5'-triphosphate contacts are provided by residues 23–24 (RK) and 63–66 (YEGL). The Mg(2+) site is built by Glu-73 and Glu-75. A ribonucleoside 5'-triphosphate-binding positions include Lys-248 and 252–255 (SLLK).

This sequence belongs to the mab-21 family. As to quaternary structure, monomer. Homodecamer; composed of 2 back to back homopentamers. The protein may exist as monomer in solution and oiligomerizes upon ligand binding.

It localises to the nucleus. Putative nucleotidyltransferase required for several aspects of embryonic development including normal development of the eye. It is unclear whether it displays nucleotidyltransferase activity in vivo. Binds single-stranded RNA (ssRNA). This Xenopus laevis (African clawed frog) protein is Putative nucleotidyltransferase MAB21L1 (mab21l1).